An 815-amino-acid chain; its full sequence is Subtilisin-like protease SBT2.5 (815 aa).

A signal peptide spans 1 to 19 (MDIGLRIFVVFVLLVAVTA). In terms of domain architecture, Inhibitor I9 spans 21–124 (VYIVTMEGDP…RSVDKDWKVR (104 aa)). The Peptidase S8 domain maps to 120 to 671 (DWKVRRLTTH…SGHVNPSAAL (552 aa)). Residues Asp-160 and His-234 each act as charge relay system in the active site. Residues 397 to 501 (TLVSANDVLL…VSKSMDLIDY (105 aa)) form the PA domain. Residues Asn-503 and Asn-577 are each glycosylated (N-linked (GlcNAc...) asparagine). Residue Ser-596 is the Charge relay system of the active site. Asn-701 carries an N-linked (GlcNAc...) asparagine glycan.

The protein belongs to the peptidase S8 family. As to expression, expressed in roots, leaves and flowers of mature plants.

The sequence is that of Subtilisin-like protease SBT2.5 from Arabidopsis thaliana (Mouse-ear cress).